The following is a 663-amino-acid chain: Epithelial sodium channel subunit gamma-2 (663 aa).

Over 1-55 (MSNSGKKLTQKLKKNLPVTGPQAPTLYELMQWYCLNTNTHGCRRIVVSKGRLRRW) the chain is Cytoplasmic. The chain crosses the membrane as a helical span at residues 56-76 (IWIVLTLIAVALIFWQCALLL). The Extracellular portion of the chain corresponds to 77–544 (MTYYSVSASI…GGQLGLWMSC (468 aa)). 8 disulfide bridges follow: C101-C286, C209-C217, C263-C270, C375-C460, C397-C456, C401-C452, C410-C437, and C412-C426. Residues 545–565 (SMVCGLEIVEVFFIDSFWVIL) form a helical membrane-spanning segment. Residues 566-663 (RQKWHKLCNW…IDSDEDVERF (98 aa)) lie on the Cytoplasmic side of the membrane.

Belongs to the amiloride-sensitive sodium channel (TC 1.A.6) family. SCNN1G subfamily. As to quaternary structure, component of the heterotrimeric epithelial sodium channel (ENaC) composed of an alpha/SCNN1A, a beta/SCNN1B and a gamma/SCNN1G subunit.

The protein resides in the apical cell membrane. It carries out the reaction Na(+)(in) = Na(+)(out). With respect to regulation, originally identified and characterized by its inhibition by the diuretic drug amiloride. This is one of the three pore-forming subunits of the heterotrimeric epithelial sodium channel (ENaC), a critical regulator of sodium balance and fluid homeostasis. ENaC operates in epithelial tissues, where it mediates the electrodiffusion of sodium ions from extracellular fluid through the apical membrane of cells, with water following osmotically. This chain is Epithelial sodium channel subunit gamma-2 (scnn1g-b), found in Xenopus laevis (African clawed frog).